A 142-amino-acid chain; its full sequence is ATP synthase epsilon chain (142 aa).

Belongs to the ATPase epsilon chain family. As to quaternary structure, F-type ATPases have 2 components, CF(1) - the catalytic core - and CF(0) - the membrane proton channel. CF(1) has five subunits: alpha(3), beta(3), gamma(1), delta(1), epsilon(1). CF(0) has three main subunits: a, b and c.

The protein resides in the cell inner membrane. In terms of biological role, produces ATP from ADP in the presence of a proton gradient across the membrane. This chain is ATP synthase epsilon chain, found in Shewanella piezotolerans (strain WP3 / JCM 13877).